The primary structure comprises 113 residues: Large ribosomal subunit protein uL22 (113 aa).

The protein belongs to the universal ribosomal protein uL22 family. In terms of assembly, part of the 50S ribosomal subunit.

Functionally, this protein binds specifically to 23S rRNA; its binding is stimulated by other ribosomal proteins, e.g. L4, L17, and L20. It is important during the early stages of 50S assembly. It makes multiple contacts with different domains of the 23S rRNA in the assembled 50S subunit and ribosome. Its function is as follows. The globular domain of the protein is located near the polypeptide exit tunnel on the outside of the subunit, while an extended beta-hairpin is found that lines the wall of the exit tunnel in the center of the 70S ribosome. The polypeptide is Large ribosomal subunit protein uL22 (Oceanobacillus iheyensis (strain DSM 14371 / CIP 107618 / JCM 11309 / KCTC 3954 / HTE831)).